A 513-amino-acid polypeptide reads, in one-letter code: 2-isopropylmalate synthase (513 aa).

Residues 4 to 266 form the Pyruvate carboxyltransferase domain; the sequence is IEFFDTSLRD…QSPLKLSETA (263 aa). The Mn(2+) site is built by Asp13, His201, His203, and Asn237. The tract at residues 390-513 is regulatory domain; that stretch reads ILDNVQIDGH…VEQISAHDGI (124 aa).

This sequence belongs to the alpha-IPM synthase/homocitrate synthase family. LeuA type 1 subfamily. As to quaternary structure, homodimer. It depends on Mn(2+) as a cofactor.

It localises to the cytoplasm. It catalyses the reaction 3-methyl-2-oxobutanoate + acetyl-CoA + H2O = (2S)-2-isopropylmalate + CoA + H(+). The protein operates within amino-acid biosynthesis; L-leucine biosynthesis; L-leucine from 3-methyl-2-oxobutanoate: step 1/4. Catalyzes the condensation of the acetyl group of acetyl-CoA with 3-methyl-2-oxobutanoate (2-ketoisovalerate) to form 3-carboxy-3-hydroxy-4-methylpentanoate (2-isopropylmalate). This is 2-isopropylmalate synthase from Lactococcus lactis subsp. lactis (strain IL1403) (Streptococcus lactis).